Here is a 387-residue protein sequence, read N- to C-terminus: Patatin-05 (387 aa).

Positions 1 to 23 (MATTKSVLVLIFMILATTSSTFA) are cleaved as a signal peptide. Residues 32–230 (LSIDGGGIKG…TVADPALLSV (199 aa)) enclose the PNPLA domain. Positions 36-41 (GGGIKG) match the GXGXXG motif. Residues 75–79 (GTSTG) carry the GXSXG motif. Catalysis depends on Ser77, which acts as the Nucleophile. 2 N-linked (GlcNAc...) asparagine glycosylation sites follow: Asn115 and Asn203. Asp216 serves as the catalytic Proton acceptor. The DGA/G motif lies at 216-218 (DGA).

The protein belongs to the patatin family. Tuber.

It is found in the vacuole. Probable lipolytic acyl hydrolase (LAH), an activity which is thought to be involved in the response of tubers to pathogens. This is Patatin-05 (pat1-k1) from Solanum tuberosum (Potato).